We begin with the raw amino-acid sequence, 233 residues long: Uridylate kinase (233 aa).

ATP is bound by residues 9-12 (KLSG), Gly-51, and Arg-55. Residues Asp-69 and 130-137 (TGNPFFST) each bind UMP. ATP contacts are provided by Asn-158, Tyr-164, and Asp-167.

This sequence belongs to the UMP kinase family. As to quaternary structure, homohexamer.

The protein resides in the cytoplasm. The enzyme catalyses UMP + ATP = UDP + ADP. It functions in the pathway pyrimidine metabolism; CTP biosynthesis via de novo pathway; UDP from UMP (UMPK route): step 1/1. With respect to regulation, inhibited by UTP. In terms of biological role, catalyzes the reversible phosphorylation of UMP to UDP. The polypeptide is Uridylate kinase (Thermus thermophilus (strain ATCC BAA-163 / DSM 7039 / HB27)).